The primary structure comprises 264 residues: Glycerol uptake facilitator protein (264 aa).

Residues 1 to 3 (MDK) lie on the Cytoplasmic side of the membrane. A helical transmembrane segment spans residues 4-32 (SLKANCIGEFLGTALLIFFGVGCVAALKV). Residues 33-37 (AGASF) are Periplasmic-facing. The helical transmembrane segment at 38 to 58 (GLWEISIMWGMGVALAVYATA) threads the bilayer. The Cytoplasmic portion of the chain corresponds to 59 to 61 (GLS). An intramembrane segment occupies 62-65 (GAHL). An NPA 1 motif is present at residues 66-68 (NPA). The helical intramembrane region spans 66–76 (NPAVTIALWKF). Topologically, residues 77–82 (ACFDGK) are cytoplasmic. A helical transmembrane segment spans residues 83–106 (KVIPYIISQMLGAFFAAALVYALY). Residues 107-141 (RNVFIDYETVHNIVRGTQESLSLAGTFSTYPHPSL) lie on the Periplasmic side of the membrane. A helical transmembrane segment spans residues 142-167 (SIGGAFAVEFVITAILMALIMALTDD). Residues 168-175 (GNGVPRGP) are Cytoplasmic-facing. A helical membrane pass occupies residues 176–192 (LAPLLIGILIAVIGGAM). The Periplasmic segment spans residues 193-196 (GPLT). Residues 197 to 200 (GFAM) lie within the membrane without spanning it. The NPA 2 signature appears at 201-203 (NPA). The helical intramembrane region spans 201-214 (NPARDFGPKFFAYL). Residues 215–229 (AGWGELALTGGREIP) are Periplasmic-facing. The helical transmembrane segment at 230-252 (YFIVPMVAPVLGALAGAWLYKKA) threads the bilayer. Topologically, residues 253-264 (IGGNLPCNCGCE) are cytoplasmic.

This sequence belongs to the MIP/aquaporin (TC 1.A.8) family.

It is found in the cell inner membrane. It carries out the reaction glycerol(in) = glycerol(out). In terms of biological role, mediates glycerol diffusion across the cytoplasmic membrane via a pore-type mechanism. This Haemophilus influenzae (strain ATCC 51907 / DSM 11121 / KW20 / Rd) protein is Glycerol uptake facilitator protein (glpF).